The following is a 141-amino-acid chain: Hemoglobin subunit alpha (141 aa).

The Globin domain occupies 1-141 (VLSPDDKKHV…VSTVLTSKYR (141 aa)). Position 3 is a phosphoserine (Ser3). N6-succinyllysine occurs at positions 7 and 11. The residue at position 16 (Lys16) is an N6-acetyllysine; alternate. An N6-succinyllysine; alternate modification is found at Lys16. Position 24 is a phosphotyrosine (Tyr24). At Ser35 the chain carries Phosphoserine. The residue at position 40 (Lys40) is an N6-succinyllysine. Position 49 is a phosphoserine (Ser49). An O2-binding site is contributed by His58. His87 is a heme b binding site. Phosphoserine is present on Ser102. Thr108 bears the Phosphothreonine mark. Phosphoserine is present on residues Ser124 and Ser131. Residues Thr134 and Thr137 each carry the phosphothreonine modification. Position 138 is a phosphoserine (Ser138).

The protein belongs to the globin family. As to quaternary structure, heterotetramer of two alpha chains and two beta chains. In terms of tissue distribution, red blood cells.

Involved in oxygen transport from the lung to the various peripheral tissues. Its function is as follows. Hemopressin acts as an antagonist peptide of the cannabinoid receptor CNR1. Hemopressin-binding efficiently blocks cannabinoid receptor CNR1 and subsequent signaling. In Cercocebus atys (Sooty mangabey), this protein is Hemoglobin subunit alpha (HBA).